Consider the following 707-residue polypeptide: Polyribonucleotide nucleotidyltransferase (707 aa).

Mg(2+) contacts are provided by Asp-486 and Asp-492. The 60-residue stretch at 553-612 (PRIHTIKINPEKIKDVIGKGGSVIRALTEETGTTIEIEDDGTVKIAATDGDKAKHAIRRI) folds into the KH domain. An S1 motif domain is found at 622–690 (GRIYQGKVTR…RQGRVRLSIK (69 aa)).

The protein belongs to the polyribonucleotide nucleotidyltransferase family. Component of the RNA degradosome, which is a multiprotein complex involved in RNA processing and mRNA degradation. Mg(2+) serves as cofactor.

The protein resides in the cytoplasm. The enzyme catalyses RNA(n+1) + phosphate = RNA(n) + a ribonucleoside 5'-diphosphate. Its function is as follows. Involved in mRNA degradation. Catalyzes the phosphorolysis of single-stranded polyribonucleotides processively in the 3'- to 5'-direction. The polypeptide is Polyribonucleotide nucleotidyltransferase (Edwardsiella ictaluri (strain 93-146)).